Here is an 80-residue protein sequence, read N- to C-terminus: Small ribosomal subunit protein uS17 (80 aa).

This sequence belongs to the universal ribosomal protein uS17 family. In terms of assembly, part of the 30S ribosomal subunit.

One of the primary rRNA binding proteins, it binds specifically to the 5'-end of 16S ribosomal RNA. This Brucella anthropi (strain ATCC 49188 / DSM 6882 / CCUG 24695 / JCM 21032 / LMG 3331 / NBRC 15819 / NCTC 12168 / Alc 37) (Ochrobactrum anthropi) protein is Small ribosomal subunit protein uS17.